Consider the following 538-residue polypeptide: Chaperonin GroEL 1 (538 aa).

Residues 29 to 32 (TLGP), 86 to 90 (DGTTT), G413, 478 to 480 (NAA), and D494 contribute to the ATP site.

The protein belongs to the chaperonin (HSP60) family. Forms a cylinder of 14 subunits composed of two heptameric rings stacked back-to-back. Interacts with the co-chaperonin GroES.

The protein resides in the cytoplasm. It carries out the reaction ATP + H2O + a folded polypeptide = ADP + phosphate + an unfolded polypeptide.. In terms of biological role, together with its co-chaperonin GroES, plays an essential role in assisting protein folding. The GroEL-GroES system forms a nano-cage that allows encapsulation of the non-native substrate proteins and provides a physical environment optimized to promote and accelerate protein folding. This is Chaperonin GroEL 1 from Corynebacterium glutamicum (strain ATCC 13032 / DSM 20300 / JCM 1318 / BCRC 11384 / CCUG 27702 / LMG 3730 / NBRC 12168 / NCIMB 10025 / NRRL B-2784 / 534).